Reading from the N-terminus, the 330-residue chain is Phosphate acyltransferase (330 aa).

It belongs to the PlsX family. In terms of assembly, homodimer. Probably interacts with PlsY.

It localises to the cytoplasm. The catalysed reaction is a fatty acyl-[ACP] + phosphate = an acyl phosphate + holo-[ACP]. It functions in the pathway lipid metabolism; phospholipid metabolism. In terms of biological role, catalyzes the reversible formation of acyl-phosphate (acyl-PO(4)) from acyl-[acyl-carrier-protein] (acyl-ACP). This enzyme utilizes acyl-ACP as fatty acyl donor, but not acyl-CoA. The protein is Phosphate acyltransferase of Streptococcus pneumoniae (strain JJA).